A 147-amino-acid chain; its full sequence is 3-dehydroquinate dehydratase (147 aa).

The active-site Proton acceptor is the Tyr23. Residues Asn75, His81, and Asp88 each coordinate substrate. Catalysis depends on His101, which acts as the Proton donor. Substrate-binding positions include 102-103 and Arg112; that span reads LS.

This sequence belongs to the type-II 3-dehydroquinase family. Homododecamer.

The catalysed reaction is 3-dehydroquinate = 3-dehydroshikimate + H2O. It functions in the pathway metabolic intermediate biosynthesis; chorismate biosynthesis; chorismate from D-erythrose 4-phosphate and phosphoenolpyruvate: step 3/7. Functionally, catalyzes a trans-dehydration via an enolate intermediate. This Stenotrophomonas maltophilia (strain K279a) protein is 3-dehydroquinate dehydratase.